A 220-amino-acid chain; its full sequence is Large ribosomal subunit protein uL6c (220 aa).

Residues 1 to 38 (MSLPLPSHMKSVFLGMKVEISTSVPVTRIGFWRKSVDC) constitute a chloroplast transit peptide.

In terms of assembly, component of the chloroplast large ribosomal subunit (LSU). Mature 70S chloroplast ribosomes of higher plants consist of a small (30S) and a large (50S) subunit. The 30S small subunit contains 1 molecule of ribosomal RNA (16S rRNA) and 24 different proteins. The 50S large subunit contains 3 rRNA molecules (23S, 5S and 4.5S rRNA) and 33 different proteins.

It is found in the plastid. Its subcellular location is the chloroplast. Functionally, component of the chloroplast ribosome (chloro-ribosome), a dedicated translation machinery responsible for the synthesis of chloroplast genome-encoded proteins, including proteins of the transcription and translation machinery and components of the photosynthetic apparatus. The sequence is that of Large ribosomal subunit protein uL6c (RPL6) from Spinacia oleracea (Spinach).